The sequence spans 1235 residues: Spike glycoprotein (1235 aa).

An N-terminal signal peptide occupies residues Met1–Leu13. The segment at Met1–Lys330 is receptor binding site. Topologically, residues Gly14–Pro1176 are extracellular. Positions Tyr15 to Thr296 constitute a BetaCoV S1-NTD domain. 5 disulfides stabilise this stretch: Cys21-Cys158, Cys153-Cys187, Cys165-Cys246, Cys284-Cys294, and Cys329-Cys354. 3 N-linked (GlcNAc...) asparagine; by host glycosylation sites follow: Asn31, Asn60, and Asn134. Asn192 carries an N-linked (GlcNAc...) asparagine; by host glycan. Residues Pro327–Thr477 enclose the BetaCoV S1-CTD domain. Asn357 carries N-linked (GlcNAc...) asparagine; by host glycosylation. Intrachain disulfides connect Cys372–Cys425 and Cys384–Cys475. N-linked (GlcNAc...) asparagine; by host glycans are attached at residues Asn435, Asn536, Asn568, Asn576, Asn599, Asn648, and Asn665. Fusion peptide stretches follow at residues Ser781–Tyr802 and Glu800–Phe820. Asn804 carries N-linked (GlcNAc...) asparagine; by host glycosylation. A disulfide bridge connects residues Cys805 and Cys816. Residues Gln881 to Phe931 form a heptad repeat 1 region. Positions Gln910 to Ile954 form a coiled coil. 5 N-linked (GlcNAc...) asparagine; by host glycosylation sites follow: Asn1091, Asn1101, Asn1120, Asn1136, and Asn1157. The tract at residues Ala1125–Glu1165 is heptad repeat 2. Residues Thr1138 to Val1166 are a coiled coil. A helical transmembrane segment spans residues Trp1177 to Ile1197. Residues Cys1198–Asp1235 are Cytoplasmic-facing. The KxHxx signature appears at Ser1231–Asp1235.

Belongs to the betacoronaviruses spike protein family. In terms of assembly, homotrimer; each monomer consists of a S1 and a S2 subunit. The resulting peplomers protrude from the virus surface as spikes. Post-translationally, specific enzymatic cleavages in vivo yield mature proteins. The precursor is processed into S1 and S2 by host cell furin or another cellular protease to yield the mature S1 and S2 proteins. Additionally, a second cleavage leads to the release of a fusion peptide after viral attachment to host cell receptor. The cytoplasmic Cys-rich domain is palmitoylated. Spike glycoprotein is digested within host endosomes.

It is found in the virion membrane. It localises to the host endoplasmic reticulum-Golgi intermediate compartment membrane. The protein localises to the host cell membrane. In terms of biological role, attaches the virion to the cell membrane by interacting with host receptor, initiating the infection. Mediates fusion of the virion and cellular membranes by acting as a class I viral fusion protein. Under the current model, the protein has at least three conformational states: pre-fusion native state, pre-hairpin intermediate state, and post-fusion hairpin state. During viral and target cell membrane fusion, the coiled coil regions (heptad repeats) assume a trimer-of-hairpins structure, positioning the fusion peptide in close proximity to the C-terminal region of the ectodomain. The formation of this structure appears to drive apposition and subsequent fusion of viral and target cell membranes. Its function is as follows. Acts as a viral fusion peptide which is unmasked following S2 cleavage occurring upon virus endocytosis. This chain is Spike glycoprotein, found in Mus musculus (Mouse).